The following is a 466-amino-acid chain: 23S rRNA (uracil(1939)-C(5))-methyltransferase RlmD (466 aa).

One can recognise a TRAM domain in the interval 1-54; sequence MVDVLNIESLDLEARGIAHRDGKVLFVEGALPGERVTVQTVRRKPSYEIAKVEE. [4Fe-4S] cluster-binding residues include Cys-67, Cys-73, Cys-76, and Cys-155. Positions 264, 293, 298, 314, 342, and 363 each coordinate S-adenosyl-L-methionine. The active-site Nucleophile is Cys-393.

The protein belongs to the class I-like SAM-binding methyltransferase superfamily. RNA M5U methyltransferase family. RlmD subfamily.

It carries out the reaction uridine(1939) in 23S rRNA + S-adenosyl-L-methionine = 5-methyluridine(1939) in 23S rRNA + S-adenosyl-L-homocysteine + H(+). Its function is as follows. Catalyzes the formation of 5-methyl-uridine at position 1939 (m5U1939) in 23S rRNA. The chain is 23S rRNA (uracil(1939)-C(5))-methyltransferase RlmD from Bordetella parapertussis (strain 12822 / ATCC BAA-587 / NCTC 13253).